Reading from the N-terminus, the 264-residue chain is Large ribosomal subunit protein mL50 (264 aa).

A mitochondrion-targeting transit peptide spans 1–75 (MSSLLKLHCI…EEGTNEASSQ (75 aa)).

This sequence belongs to the mitochondrion-specific ribosomal protein mL50 family. Component of the mitochondrial large ribosomal subunit (mt-LSU). Mature yeast 74S mitochondrial ribosomes consist of a small (37S) and a large (54S) subunit. The 37S small subunit contains a 15S ribosomal RNA (15S mt-rRNA) and 34 different proteins. The 54S large subunit contains a 21S rRNA (21S mt-rRNA) and 46 different proteins.

Its subcellular location is the mitochondrion. Functionally, component of the mitochondrial ribosome (mitoribosome), a dedicated translation machinery responsible for the synthesis of mitochondrial genome-encoded proteins, including at least some of the essential transmembrane subunits of the mitochondrial respiratory chain. The mitoribosomes are attached to the mitochondrial inner membrane and translation products are cotranslationally integrated into the membrane. This Saccharomyces cerevisiae (strain ATCC 204508 / S288c) (Baker's yeast) protein is Large ribosomal subunit protein mL50 (MRPL13).